A 526-amino-acid chain; its full sequence is MGHLSAPLHRVRVPWQGLLLTASLLTFWNPPTTAQLTTESMPFNVAEGKEVLLLVHNLPQQLFGYSWYKGERVDGNRQIVGYAIGTQQATPGPANSGRETIYPNASLLIQNVTQNDTGFYTLQVIKSDLVNEEATGQFHVYPELPKPSISSNNSNPVEDKDAVAFTCEPETQDTTYLWWINNQSLPVSPRLQLSNGNRTLTLLSVTRNDTGPYECEIQNPVSANRSDPVTLNVTYGPDTPTISPSDTYYRPGANLSLSCYAASNPPAQYSWLINGTFQQSTQELFIPNITVNNSGSYTCHANNSVTGCNRTTVKTIIVTELSPVVAKPQIKASKTTVTGDKDSVNLTCSTNDTGISIRWFFKNQSLPSSERMKLSQGNTTLSINPVKREDAGTYWCEVFNPISKNQSDPIMLNVNYNALPQENGLSPGAIAGIVIGVVALVALIAVALACFLHFGKTGRASDQRDLTEHKPSVSNHTQDHSNDPPNKMNEVTYSTLNFEAQQPTQPTSASPSLTATEIIYSEVKKQ.

The N-terminal stretch at 1–34 is a signal peptide; the sequence is MGHLSAPLHRVRVPWQGLLLTASLLTFWNPPTTA. Pyrrolidone carboxylic acid is present on Gln35. In terms of domain architecture, Ig-like V-type spans 35–142; it reads QLTTESMPFN…EATGQFHVYP (108 aa). At 35–428 the chain is on the extracellular side; the sequence is QLTTESMPFN…LPQENGLSPG (394 aa). Residues 39–142 are required for homophilic binding; the sequence is ESMPFNVAEG…EATGQFHVYP (104 aa). 20 N-linked (GlcNAc...) asparagine glycosylation sites follow: Asn104, Asn111, Asn115, Asn152, Asn182, Asn197, Asn208, Asn224, Asn232, Asn254, Asn274, Asn288, Asn292, Asn302, Asn309, Asn345, Asn351, Asn363, Asn378, and Asn405. 3 consecutive Ig-like C2-type domains span residues 145 to 232, 237 to 317, and 323 to 413; these read PKPS…VTLN, PDTP…KTII, and PVVA…IMLN. A disulfide bridge connects residues Cys167 and Cys215. Cys259 and Cys299 are oxidised to a cystine. Cys348 and Cys396 are disulfide-bonded. The helical transmembrane segment at 429 to 452 threads the bilayer; the sequence is AIAGIVIGVVALVALIAVALACFL. The tract at residues 450-462 is interaction with calmodulin; that stretch reads CFLHFGKTGRASD. The interval 452–526 is interaction with FLNA; it reads LHFGKTGRAS…EIIYSEVKKQ (75 aa). Over 453-526 the chain is Cytoplasmic; sequence HFGKTGRASD…EIIYSEVKKQ (74 aa). Positions 461-482 are enriched in basic and acidic residues; that stretch reads SDQRDLTEHKPSVSNHTQDHSN. Residues 461–513 are disordered; it reads SDQRDLTEHKPSVSNHTQDHSNDPPNKMNEVTYSTLNFEAQQPTQPTSASPSL. Over residues 489–513 the composition is skewed to polar residues; sequence NEVTYSTLNFEAQQPTQPTSASPSL. Residues 489–526 form a required for interaction with PTPN11 and PTPN6 and for control of phosphorylation level region; the sequence is NEVTYSTLNFEAQQPTQPTSASPSLTATEIIYSEVKKQ. Tyr493 carries the post-translational modification Phosphotyrosine; by SRC, LCK, INSR and EGFR. At Ser508 the chain carries Phosphoserine. Position 520 is a phosphotyrosine; by INSR, SRC and LCK (Tyr520). The interval 520–523 is essential for interaction with PTPN11 and PTPN6; that stretch reads YSEV.

Belongs to the immunoglobulin superfamily. CEA family. As to quaternary structure, monomer. Oligomer. Heterodimer. Homodimer. Cis-dimer/oligomer (via Ig-like C2-type and/or via cytoplasmic domains); induced by trans-homophilic cell adhesion through an allosteric mechanism transmitted by the Ig-like V-type domain, and is regulated by intracellular calcium and calmodulin. Interacts (via cytoplasmic domain) with calmodulin in a calcium dependent manner; reduces homophilic cell adhesion through dissociation of dimer. Isoform 1 interacts (via cytoplasmic domain) with PTPN11 (preferentially) and PTPN6; cis-homodimer form is preferred; this interaction is decreased by formation of Isoform 1 /Isoform 8 cis-heterodimers and is dependent on the monomer/dimer equilibrium; this interaction is phosphorylation-dependent. Isoform 1 interacts with LYN. Isoform 1 interacts (via cytoplasmic domain) with SRC (via SH2 domain); this interaction is regulated by trans-homophilic cell adhesion. Isoform 1 interacts (via cytoplasmic domain) with LCK; mediates phosphorylation at Tyr-493 and Tyr-520 resulting in PTPN6 association. Isoform 1 interacts with PTPN6; this interaction is phosphorylation-dependent and causes a profound decrease in TCR stimulation-induced CD247 and ZAP70 phosphorylation. Isoform 1 interacts with TCR/CD3 complex through TCR beta chain and CD3E; colocalizes at the cell surface and upon stimulation of the TCR/CD3 complex recruits PTPN6 in the TCR/CD3 complex, resulting in dephosphorylation of CD247 and ZAP70. Isoform 1 interacts (via cytoplasmic domain) with SHC1 (via SH2 domain); SHC1 mediates interaction with INSR or EGFR in a Ser-508 phosphorylation-dependent manner. Isoform 1 interacts with EGFR; the interaction is indirect. Isoform 1 interacts with CSF3R; down-regulates the CSF3R-STAT3 pathway through recruitment of PTPN6 that dephosphorylates CSF3R. Isoform 1 (phosphorylated form) interacts with TLR4 and SYK; recruits PTPN6 that dephosphorylates SYK, reducing the production of reactive oxygen species (ROS) and lysosome disruption, leading to a reduction of the inflammasome activity. Isoform 1 interacts with FLNA; inhibits cell migration and cell scattering by interfering with the interaction of FLNA with RALA. Isoform 1 interacts (via cytoplasmic domain) with PXN; the interaction is phosphotyrosyl-dependent. Isoform 1 interacts with KLRK1; recruits PTPN6 that dephosphorylates VAV1. Isoform 1 interacts with CEACAM8. Isoform 1 interacts with FASN; this interaction is insulin and phosphorylation-dependent; reduces fatty-acid synthase activity. Interacts (via Ig-like V-type) with HAVCR2 (via Ig-like V-type); facilitates the maturation and cell surface expression of HAVCR2 thereby regulating T cell tolerance induction. Isoform 8 interacts (via the cytoplasmic domain) with ANXA2; this interaction is regulated by phosphorylation and appears in the AIIt complex. Interacts (via Lewis X moieties) with CD209 (via C-type lectin domain); this interaction is regulated by the glycosylation pattern of CEACAM1 on cell types and regulates contact between dendritic cells and neutrophils. Phosphorylated on serine and tyrosine. Isoform 1 is phosphorylated on tyrosine by Src family kinases like SRC and LCK and by receptor like CSF3R, EGFR and INSR upon stimulation. Phosphorylated at Ser-508; mediates activity. Phosphorylated at Tyr-493; regulates activity. Phosphorylated at Tyr-493 by EGFR and INSR upon stimulation; this phosphorylation is Ser-508-phosphorylation-dependent; mediates cellular internalization; increases interaction with downstream proteins like SHC1 and FASN. Phosphorylated at Tyr-493 and Tyr-520 by LCK; mediates PTPN6 association and is regulated by homophilic ligation of CEACAM1 in the absence of T cell activation. Phosphorylated at Tyr-520; mediates interaction with PTPN11. In terms of processing, phosphorylated on serine and threonine. In terms of tissue distribution, expressed in columnar epithelial cells of the colon (at protein level). The predominant forms expressed by T cells are those containing a long cytoplasmic domain. Expressed in granulocytes and lymphocytes. Leukocytes only express isoforms 6 and isoform 1.

It localises to the cell membrane. The protein localises to the lateral cell membrane. Its subcellular location is the apical cell membrane. It is found in the basal cell membrane. The protein resides in the cell junction. It localises to the adherens junction. The protein localises to the secreted. Its subcellular location is the cytoplasmic vesicle. It is found in the secretory vesicle membrane. The protein resides in the cell projection. It localises to the microvillus membrane. In terms of biological role, cell adhesion protein that mediates homophilic cell adhesion in a calcium-independent manner. Plays a role as coinhibitory receptor in immune response, insulin action and also functions as an activator during angiogenesis. Its coinhibitory receptor function is phosphorylation- and PTPN6 -dependent, which in turn, suppress signal transduction of associated receptors by dephosphorylation of their downstream effectors. Plays a role in immune response, of T cells, natural killer (NK) and neutrophils. Upon TCR/CD3 complex stimulation, inhibits TCR-mediated cytotoxicity by blocking granule exocytosis by mediating homophilic binding to adjacent cells, allowing interaction with and phosphorylation by LCK and interaction with the TCR/CD3 complex which recruits PTPN6 resulting in dephosphorylation of CD247 and ZAP70. Also inhibits T cell proliferation and cytokine production through inhibition of JNK cascade and plays a crucial role in regulating autoimmunity and anti-tumor immunity by inhibiting T cell through its interaction with HAVCR2. Upon natural killer (NK) cells activation, inhibit KLRK1-mediated cytolysis of CEACAM1-bearing tumor cells by trans-homophilic interactions with CEACAM1 on the target cell and lead to cis-interaction between CEACAM1 and KLRK1, allowing PTPN6 recruitment and then VAV1 dephosphorylation. Upon neutrophils activation negatively regulates IL1B production by recruiting PTPN6 to a SYK-TLR4-CEACAM1 complex, that dephosphorylates SYK, reducing the production of reactive oxygen species (ROS) and lysosome disruption, which in turn, reduces the activity of the inflammasome. Down-regulates neutrophil production by acting as a coinhibitory receptor for CSF3R by down-regulating the CSF3R-STAT3 pathway through recruitment of PTPN6 that dephosphorylates CSF3R. Also regulates insulin action by promoting INS clearance and regulating lipogenesis in liver through regulating insulin signaling. Upon INS stimulation, undergoes phosphorylation by INSR leading to INS clearance by increasing receptor-mediated insulin endocytosis. This inernalization promotes interaction with FASN leading to receptor-mediated insulin degradation and to reduction of FASN activity leading to negative regulation of fatty acid synthesis. INSR-mediated phosphorylation also provokes a down-regulation of cell proliferation through SHC1 interaction resulting in decrease coupling of SHC1 to the MAPK3/ERK1-MAPK1/ERK2 and phosphatidylinositol 3-kinase pathways. Functions as activator in angiogenesis by promoting blood vessel remodeling through endothelial cell differentiation and migration and in arteriogenesis by increasing the number of collateral arteries and collateral vessel calibers after ischemia. Also regulates vascular permeability through the VEGFR2 signaling pathway resulting in control of nitric oxide production. Down-regulates cell growth in response to EGF through its interaction with SHC1 that mediates interaction with EGFR resulting in decrease coupling of SHC1 to the MAPK3/ERK1-MAPK1/ERK2 pathway. Negatively regulates platelet aggregation by decreasing platelet adhesion on type I collagen through the GPVI-FcRgamma complex. Inhibits cell migration and cell scattering through interaction with FLNA; interferes with the interaction of FLNA with RALA. Mediates bile acid transport activity in a phosphorylation dependent manner. Negatively regulates osteoclastogenesis. Functionally, cell adhesion protein that mediates homophilic cell adhesion in a calcium-independent manner. Promotes populations of T cells regulating IgA production and secretion associated with control of the commensal microbiota and resistance to enteropathogens. The polypeptide is Cell adhesion molecule CEACAM1 (Homo sapiens (Human)).